We begin with the raw amino-acid sequence, 416 residues long: MDPNQGNPLEPQDSPEIPKPSLNLSSILAKSTLPQEPPSMVGDRLPPKTGAVVIDMGTGTCKVGFAGQARPTYTVATIVGCQPQKPATSGQPVMETFIGEAARKRPELTLVQPVHSGIVVDWDAAELIWRHMLEHDLRVATRDHPLLFSDPPFSPSTNREKLVEVAFESLSSPAMYVASQSVLSVYAHGRVSGLVVDTGHGVTYTVPVFQGYNLPHATQRLDLAGTHLTAFLAEMLLGSGLPLGQQDLDTVENIKHRYCYVAPDFLKEQARPELECRQTLKLPDGRTVTLGKELFQCPELLFSPPEIPGLSPVGVPTMAQQSLSKVAAELRTDLAQNVLLCGGSSLFTGFQARFQTELLRNLPPEAHVVVMAQPTRNFSVWIGGSILASLRTFQSCWVLREQYEEQGPYIVYRKCY.

Residues Met-1–Asn-23 are disordered.

The protein belongs to the actin family. Interacts with ACTL7A.

The protein localises to the cytoplasmic vesicle. Its subcellular location is the secretory vesicle. It is found in the acrosome. The protein resides in the cytoplasm. It localises to the cytoskeleton. The protein localises to the perinuclear theca. Testis-specic protein that plays an important role in fusion of proacrosomal vesicles and perinuclear theca formation. This chain is Actin-like protein 9 (ACTL9), found in Bos taurus (Bovine).